The primary structure comprises 398 residues: Probable L-tyrosine/L-aspartate decarboxylase (398 aa).

Lysine 242 is subject to N6-(pyridoxal phosphate)lysine.

It belongs to the group II decarboxylase family. MfnA subfamily. Pyridoxal 5'-phosphate is required as a cofactor.

The enzyme catalyses L-tyrosine + H(+) = tyramine + CO2. It carries out the reaction L-aspartate + H(+) = beta-alanine + CO2. It participates in cofactor biosynthesis; methanofuran biosynthesis. It functions in the pathway cofactor biosynthesis; coenzyme A biosynthesis. In terms of biological role, catalyzes the decarboxylation of L-tyrosine to produce tyramine for methanofuran biosynthesis. Can also catalyze the decarboxylation of L-aspartate to produce beta-alanine for coenzyme A (CoA) biosynthesis. This chain is Probable L-tyrosine/L-aspartate decarboxylase, found in Methanosarcina mazei (strain ATCC BAA-159 / DSM 3647 / Goe1 / Go1 / JCM 11833 / OCM 88) (Methanosarcina frisia).